The sequence spans 229 residues: Non-structural protein P8 (229 aa).

A CCM-I region spans residues 14 to 26; it reads MKHNQDRVEELSL. Positions 94-116 are CCM-III; it reads IKRHVNEQILPKLKSDLSELKKK. Transmembrane regions (helical) follow at residues 119-139 and 162-182; these read IIHT…VCTL and SLNP…MVCA. Residues 185–198 form a CCM-II region; it reads ERALNQQIDMIKKE.

The protein belongs to the orbivirus NS3 family. In terms of assembly, forms homooligomers via coiled-coil motif. Interacts with host OPTN; this interaction inhibits innate immune response.

Its subcellular location is the host cell membrane. The protein localises to the host Golgi apparatus. Plays a role in the inhibition of host innate immune response. Interacts with host OPTN and thus inhibits the recruitment of TBK1 to the host Golgi apparatus. In turn, downstream partner IRF3 cannot be activated and IFN-beta production is impaired. In terms of biological role, facilitates viral particle release either by increasing plasma membrane permeability through a viroporin-like activity or by viral budding. The chain is Non-structural protein P8 (Segment-10) from Bluetongue virus 10 (isolate USA) (BTV 10).